An 82-amino-acid polypeptide reads, in one-letter code: UPF0180 protein BC_1394 (82 aa).

This sequence belongs to the UPF0180 family.

The polypeptide is UPF0180 protein BC_1394 (Bacillus cereus (strain ATCC 14579 / DSM 31 / CCUG 7414 / JCM 2152 / NBRC 15305 / NCIMB 9373 / NCTC 2599 / NRRL B-3711)).